Reading from the N-terminus, the 168-residue chain is Mediator of RNA polymerase II transcription subunit 7b (168 aa).

The span at 1–12 (MATATYPPPPPY) shows a compositional bias: pro residues. The disordered stretch occupies residues 1–33 (MATATYPPPPPYYRLYKDFSENTDSAPEPPPPI). Coiled-coil stretches lie at residues 64–92 (KDSN…ADVL) and 132–162 (IMEL…KDAF).

The protein belongs to the Mediator complex subunit 7 family. Component of the Mediator complex. Interacts with MEE14/CBP1.

Its subcellular location is the nucleus. Functionally, component of the Mediator complex, a coactivator involved in the regulated transcription of nearly all RNA polymerase II-dependent genes. Mediator functions as a bridge to convey information from gene-specific regulatory proteins to the basal RNA polymerase II transcription machinery. The Mediator complex, having a compact conformation in its free form, is recruited to promoters by direct interactions with regulatory proteins and serves for the assembly of a functional pre-initiation complex with RNA polymerase II and the general transcription factors. The polypeptide is Mediator of RNA polymerase II transcription subunit 7b (MED7B) (Arabidopsis thaliana (Mouse-ear cress)).